Here is a 78-residue protein sequence, read N- to C-terminus: Musculoskeletal embryonic nuclear protein 1 (78 aa).

Disordered regions lie at residues 1-33 (MSQP…QEIK) and 45-78 (QMGS…SVFG). Positions 6–14 (PVKKKRPPV) match the Nuclear localization signal motif. Basic and acidic residues predominate over residues 64–78 (VFEKSKDEPPKSVFG).

The protein belongs to the MUSTN1 family. Predominantly expressed in heart and skeletal muscle. Detected in skeletal muscle satellite cells where expression increases with cell proliferation.

Its subcellular location is the nucleus. Functionally, promotes the differentiation and proliferation of skeletal muscle satellite cells. This Gallus gallus (Chicken) protein is Musculoskeletal embryonic nuclear protein 1 (MUSTN1).